Consider the following 432-residue polypeptide: Tol-Pal system protein TolB (432 aa).

Residues 1–21 (MKKVIYTIVGFVFMWSTSVYA) form the signal peptide.

This sequence belongs to the TolB family. The Tol-Pal system is composed of five core proteins: the inner membrane proteins TolA, TolQ and TolR, the periplasmic protein TolB and the outer membrane protein Pal. They form a network linking the inner and outer membranes and the peptidoglycan layer.

It is found in the periplasm. In terms of biological role, part of the Tol-Pal system, which plays a role in outer membrane invagination during cell division and is important for maintaining outer membrane integrity. This Hydrogenovibrio crunogenus (strain DSM 25203 / XCL-2) (Thiomicrospira crunogena) protein is Tol-Pal system protein TolB.